We begin with the raw amino-acid sequence, 309 residues long: Homoserine O-succinyltransferase (309 aa).

Cys-142 functions as the Acyl-thioester intermediate in the catalytic mechanism. Substrate is bound by residues Lys-163 and Ser-192. The active-site Proton acceptor is the His-235. Residue Glu-237 is part of the active site. Residue Arg-249 participates in substrate binding.

The protein belongs to the MetA family. Homodimer.

The protein localises to the cytoplasm. It carries out the reaction L-homoserine + succinyl-CoA = O-succinyl-L-homoserine + CoA. It functions in the pathway amino-acid biosynthesis; L-methionine biosynthesis via de novo pathway; O-succinyl-L-homoserine from L-homoserine: step 1/1. Functionally, transfers a succinyl group from succinyl-CoA to L-homoserine, forming succinyl-L-homoserine. The sequence is that of Homoserine O-succinyltransferase from Salmonella choleraesuis (strain SC-B67).